The following is a 226-amino-acid chain: Phosphoglycolate phosphatase (226 aa).

Asp-10 (nucleophile) is an active-site residue. Positions 10, 12, and 175 each coordinate Mg(2+).

The protein belongs to the HAD-like hydrolase superfamily. CbbY/CbbZ/Gph/YieH family. It depends on Mg(2+) as a cofactor.

The enzyme catalyses 2-phosphoglycolate + H2O = glycolate + phosphate. It functions in the pathway organic acid metabolism; glycolate biosynthesis; glycolate from 2-phosphoglycolate: step 1/1. Functionally, specifically catalyzes the dephosphorylation of 2-phosphoglycolate. Is involved in the dissimilation of the intracellular 2-phosphoglycolate formed during the DNA repair of 3'-phosphoglycolate ends, a major class of DNA lesions induced by oxidative stress. This Vibrio cholerae serotype O1 (strain ATCC 39315 / El Tor Inaba N16961) protein is Phosphoglycolate phosphatase.